Reading from the N-terminus, the 210-residue chain is Imidazole glycerol phosphate synthase subunit HisH (210 aa).

Residues 3–210 enclose the Glutamine amidotransferase type-1 domain; sequence TIAIIDYGMG…ILKNFALSKA (208 aa). Catalysis depends on Cys81, which acts as the Nucleophile. Catalysis depends on residues His190 and Glu192.

As to quaternary structure, heterodimer of HisH and HisF.

The protein resides in the cytoplasm. It carries out the reaction 5-[(5-phospho-1-deoxy-D-ribulos-1-ylimino)methylamino]-1-(5-phospho-beta-D-ribosyl)imidazole-4-carboxamide + L-glutamine = D-erythro-1-(imidazol-4-yl)glycerol 3-phosphate + 5-amino-1-(5-phospho-beta-D-ribosyl)imidazole-4-carboxamide + L-glutamate + H(+). It catalyses the reaction L-glutamine + H2O = L-glutamate + NH4(+). It participates in amino-acid biosynthesis; L-histidine biosynthesis; L-histidine from 5-phospho-alpha-D-ribose 1-diphosphate: step 5/9. Its function is as follows. IGPS catalyzes the conversion of PRFAR and glutamine to IGP, AICAR and glutamate. The HisH subunit catalyzes the hydrolysis of glutamine to glutamate and ammonia as part of the synthesis of IGP and AICAR. The resulting ammonia molecule is channeled to the active site of HisF. The sequence is that of Imidazole glycerol phosphate synthase subunit HisH from Geobacter metallireducens (strain ATCC 53774 / DSM 7210 / GS-15).